The following is a 241-amino-acid chain: 1-(5-phosphoribosyl)-5-[(5-phosphoribosylamino)methylideneamino] imidazole-4-carboxamide isomerase (241 aa).

The Proton acceptor role is filled by aspartate 8. The active-site Proton donor is aspartate 131.

Belongs to the HisA/HisF family.

The protein localises to the cytoplasm. The catalysed reaction is 1-(5-phospho-beta-D-ribosyl)-5-[(5-phospho-beta-D-ribosylamino)methylideneamino]imidazole-4-carboxamide = 5-[(5-phospho-1-deoxy-D-ribulos-1-ylimino)methylamino]-1-(5-phospho-beta-D-ribosyl)imidazole-4-carboxamide. It participates in amino-acid biosynthesis; L-histidine biosynthesis; L-histidine from 5-phospho-alpha-D-ribose 1-diphosphate: step 4/9. In Sorangium cellulosum (strain So ce56) (Polyangium cellulosum (strain So ce56)), this protein is 1-(5-phosphoribosyl)-5-[(5-phosphoribosylamino)methylideneamino] imidazole-4-carboxamide isomerase.